A 380-amino-acid chain; its full sequence is Succinyl-diaminopimelate desuccinylase (380 aa).

Histidine 69 contributes to the Zn(2+) binding site. Aspartate 71 is a catalytic residue. Aspartate 102 is a Zn(2+) binding site. Glutamate 135 serves as the catalytic Proton acceptor. The Zn(2+) site is built by glutamate 136, glutamate 164, and histidine 353.

Belongs to the peptidase M20A family. DapE subfamily. As to quaternary structure, homodimer. It depends on Zn(2+) as a cofactor. Co(2+) serves as cofactor.

It catalyses the reaction N-succinyl-(2S,6S)-2,6-diaminopimelate + H2O = (2S,6S)-2,6-diaminopimelate + succinate. Its pathway is amino-acid biosynthesis; L-lysine biosynthesis via DAP pathway; LL-2,6-diaminopimelate from (S)-tetrahydrodipicolinate (succinylase route): step 3/3. In terms of biological role, catalyzes the hydrolysis of N-succinyl-L,L-diaminopimelic acid (SDAP), forming succinate and LL-2,6-diaminopimelate (DAP), an intermediate involved in the bacterial biosynthesis of lysine and meso-diaminopimelic acid, an essential component of bacterial cell walls. The chain is Succinyl-diaminopimelate desuccinylase from Ruegeria pomeroyi (strain ATCC 700808 / DSM 15171 / DSS-3) (Silicibacter pomeroyi).